A 37-amino-acid polypeptide reads, in one-letter code: Large ribosomal subunit protein bL36c (37 aa).

The protein belongs to the bacterial ribosomal protein bL36 family.

The protein resides in the plastid. The protein localises to the chloroplast. This is Large ribosomal subunit protein bL36c from Pleurastrum terricola (Filamentous green alga).